A 379-amino-acid chain; its full sequence is Succinyl-diaminopimelate desuccinylase (379 aa).

Histidine 70 is a binding site for Zn(2+). Aspartate 72 is a catalytic residue. A Zn(2+)-binding site is contributed by aspartate 103. Catalysis depends on glutamate 137, which acts as the Proton acceptor. Residues glutamate 138, glutamate 166, and histidine 352 each coordinate Zn(2+).

It belongs to the peptidase M20A family. DapE subfamily. As to quaternary structure, homodimer. Zn(2+) is required as a cofactor. The cofactor is Co(2+).

It carries out the reaction N-succinyl-(2S,6S)-2,6-diaminopimelate + H2O = (2S,6S)-2,6-diaminopimelate + succinate. It participates in amino-acid biosynthesis; L-lysine biosynthesis via DAP pathway; LL-2,6-diaminopimelate from (S)-tetrahydrodipicolinate (succinylase route): step 3/3. Catalyzes the hydrolysis of N-succinyl-L,L-diaminopimelic acid (SDAP), forming succinate and LL-2,6-diaminopimelate (DAP), an intermediate involved in the bacterial biosynthesis of lysine and meso-diaminopimelic acid, an essential component of bacterial cell walls. The polypeptide is Succinyl-diaminopimelate desuccinylase (Burkholderia lata (strain ATCC 17760 / DSM 23089 / LMG 22485 / NCIMB 9086 / R18194 / 383)).